The sequence spans 327 residues: UPF0065 protein in gbd 5'region (327 aa).

The tat-type signal signal peptide spans 1-30 (MQRRHFIARAGIAAATAALGLAAMPAQAQA).

It belongs to the UPF0065 (bug) family. In terms of processing, predicted to be exported by the Tat system. The position of the signal peptide cleavage has not been experimentally proven.

Its subcellular location is the periplasm. The protein is UPF0065 protein in gbd 5'region of Cupriavidus necator (Alcaligenes eutrophus).